Consider the following 574-residue polypeptide: Sulfite reductase [NADPH] hemoprotein beta-component (574 aa).

[4Fe-4S] cluster is bound by residues cysteine 439, cysteine 445, cysteine 484, and cysteine 488. Residue cysteine 488 coordinates siroheme.

It belongs to the nitrite and sulfite reductase 4Fe-4S domain family. As to quaternary structure, alpha(8)-beta(8). The alpha component is a flavoprotein, the beta component is a hemoprotein. The cofactor is siroheme. It depends on [4Fe-4S] cluster as a cofactor.

The enzyme catalyses hydrogen sulfide + 3 NADP(+) + 3 H2O = sulfite + 3 NADPH + 4 H(+). It participates in sulfur metabolism; hydrogen sulfide biosynthesis; hydrogen sulfide from sulfite (NADPH route): step 1/1. Component of the sulfite reductase complex that catalyzes the 6-electron reduction of sulfite to sulfide. This is one of several activities required for the biosynthesis of L-cysteine from sulfate. The protein is Sulfite reductase [NADPH] hemoprotein beta-component of Paenibacillus sp. (strain JDR-2).